The primary structure comprises 159 residues: Cyclic pyranopterin monophosphate synthase (159 aa).

Substrate contacts are provided by residues Leu-76 to His-78 and Met-114 to Glu-115. Asp-129 is an active-site residue.

Belongs to the MoaC family. As to quaternary structure, homohexamer; trimer of dimers.

It catalyses the reaction (8S)-3',8-cyclo-7,8-dihydroguanosine 5'-triphosphate = cyclic pyranopterin phosphate + diphosphate. The protein operates within cofactor biosynthesis; molybdopterin biosynthesis. Its function is as follows. Catalyzes the conversion of (8S)-3',8-cyclo-7,8-dihydroguanosine 5'-triphosphate to cyclic pyranopterin monophosphate (cPMP). The sequence is that of Cyclic pyranopterin monophosphate synthase from Clostridium botulinum (strain Alaska E43 / Type E3).